Reading from the N-terminus, the 547-residue chain is Cellodextrinase (547 aa).

Asp148 functions as the Nucleophile in the catalytic mechanism. Catalysis depends on residues His474, Asp520, and Glu529.

Belongs to the glycosyl hydrolase 9 (cellulase E) family.

It localises to the secreted. It carries out the reaction Endohydrolysis of (1-&gt;4)-beta-D-glucosidic linkages in cellulose, lichenin and cereal beta-D-glucans.. Is not inhibited by methylcellulose. Functionally, glycoside hydrolase that rapidly hydrolyzes short-chain cellodextrins to yield either cellobiose or cellobiose and glucose as end products; cellobiose is not hydrolyzed further. Also shows limited activity against endoglucanase specific substrates (carboxymethylcellulose (CMC), lichenan, laminarin and xylan). This Butyrivibrio fibrisolvens protein is Cellodextrinase.